The sequence spans 619 residues: DNA mismatch repair protein MutL (619 aa).

It belongs to the DNA mismatch repair MutL/HexB family.

Functionally, this protein is involved in the repair of mismatches in DNA. It is required for dam-dependent methyl-directed DNA mismatch repair. May act as a 'molecular matchmaker', a protein that promotes the formation of a stable complex between two or more DNA-binding proteins in an ATP-dependent manner without itself being part of a final effector complex. This Xylella fastidiosa (strain 9a5c) protein is DNA mismatch repair protein MutL.